Consider the following 258-residue polypeptide: MAREPIIMNKLNLSIAVGNYVRIRPLVDGEVQIDGVDPIFMLQDPEEIFFRAFRHADYDICELSLSSYSVKTAAGTSPYIAVPVFPSRAFRHTSIYIRNDRGIESAADLKGKRIGVPEYQLTANVWVRLFLEEDHGLKASDVTWVRGGYEETGRLEKIVLKLPADVIVENAPETETLSGMLASGELDAVIGPRAPSCFTQGHPKVSYLYRDPQGAASDWYRALSYSRSCTCWGSGARWPSSTLGYPGPLPKHSRSPSP.

It to P.testosteroni DHP decarboxylase.

The catalysed reaction is 4,5-dihydroxyphthalate + H(+) = 3,4-dihydroxybenzoate + CO2. It participates in xenobiotic degradation; phthalate degradation; 3,4-dihydroxybenzoate from phthalate: step 3/3. The protein is 4,5-dihydroxyphthalate decarboxylase (pht5) of Pseudomonas putida (Arthrobacter siderocapsulatus).